A 311-amino-acid polypeptide reads, in one-letter code: Cytosolic Fe-S cluster assembly factor Nubp1 homolog (311 aa).

4 residues coordinate [4Fe-4S] cluster: cysteine 9, cysteine 23, cysteine 26, and cysteine 32. 63–70 is a binding site for ATP; it reads GKGGVGKS. [4Fe-4S] cluster is bound by residues cysteine 240 and cysteine 243.

Belongs to the Mrp/NBP35 ATP-binding proteins family. NUBP1/NBP35 subfamily. In terms of assembly, heterotetramer of 2 Nubp1 and 2 Nubp2 chains. The cofactor is [4Fe-4S] cluster.

The protein resides in the cytoplasm. Its function is as follows. Component of the cytosolic iron-sulfur (Fe/S) protein assembly (CIA) machinery. Required for maturation of extramitochondrial Fe-S proteins. The Nubp1-Nubp2 heterotetramer forms a Fe-S scaffold complex, mediating the de novo assembly of an Fe-S cluster and its transfer to target apoproteins. The chain is Cytosolic Fe-S cluster assembly factor Nubp1 homolog from Drosophila erecta (Fruit fly).